Consider the following 470-residue polypeptide: Probable citrate synthase, mitochondrial (470 aa).

Residues His297, His351, and Asp406 contribute to the active site.

It belongs to the citrate synthase family. Homodimer.

Its subcellular location is the mitochondrion matrix. It carries out the reaction oxaloacetate + acetyl-CoA + H2O = citrate + CoA + H(+). It participates in carbohydrate metabolism; tricarboxylic acid cycle; isocitrate from oxaloacetate: step 1/2. In Leishmania braziliensis, this protein is Probable citrate synthase, mitochondrial.